A 34-amino-acid polypeptide reads, in one-letter code: Toxin GTx1-15 (34 aa).

3 cysteine pairs are disulfide-bonded: C2–C17, C9–C23, and C16–C30. F34 is modified (phenylalanine amide).

The protein belongs to the neurotoxin 10 (Hwtx-1) family. 08 (Gtx1-15) subfamily. In terms of tissue distribution, expressed by the venom gland.

It is found in the secreted. Functionally, potent voltage-gated sodium channel blocker. Potently inhibits the voltage-gated sodium channels Nav1.7/SCN9A (IC(50)=0.58-10 nM). Also shows a moderate activity on Nav1.1/SCN1A (IC(50)=6 nM), Nav1.2/SCN2A (IC(50)=5-128 nM), Nav1.3/SCN3A (IC(50)=20.3-170 nM), and Nav1.6/SCN8A (IC(50)=17-20.1 nM). Shows an unclear inhibition of Nav1.4/SCN4A (IC(50)=200 nM to &gt;10 uM), Nav1.5/SCN5A (IC(50)=140 nM to &gt;10 uM) and Nav1.8/SCN10A (IC(50)=68-12200 nM). Weakly blocks the low voltage-gated calcium channels Cav3.1/CACNA1G (30% inhibition of the peak current at 9.8 nM). shows moderate affinity for lipid bilayers. In vivo, when tested on the OD1-induced mouse model of Nav1.7/SCN9A-mediated pain, the toxin is effective when co-administered with OD1, but lacks efficacy when delivered systemically. The polypeptide is Toxin GTx1-15 (Grammostola porteri (Tarantula spider)).